The primary structure comprises 205 residues: Macrophage immunometabolism regulator (205 aa).

Positions 1–40 are disordered; that stretch reads MEVDINGVNRTNNSVPSTAEGSSPSKPDPEKPRCSSTPCS. Polar residues predominate over residues 8-25; sequence VNRTNNSVPSTAEGSSPS.

Belongs to the UNC119-binding protein family. Interacts with unc119 family proteins; interaction preferentially takes place when unc119 proteins are unliganded with myristoylated proteins.

It is found in the cytoplasm. The protein resides in the cell projection. Its subcellular location is the cilium. In terms of biological role, may play a role in immune regulation through regulation of the macrophage function. May also play a role in trafficking of proteins via its interaction with unc119 family cargo adapters. May play a role in ciliary membrane localization. The chain is Macrophage immunometabolism regulator (macir) from Xenopus laevis (African clawed frog).